We begin with the raw amino-acid sequence, 480 residues long: MTHHLAPLDSLPTSIYPPSAYPPPSFFESSSLIYPALLIPAKRTGEVQKTLKDVIFTEPKRKSVYPLEEGVDYSSIEVSAEGGYDPMKERKVVLIRLGDIAGKNEEEQITGIKEDPVFQDARVKSMLLSAKINIGAEPSTAPNAATNVEEVPSSFEIAGHVAHVNLRSESLPYKYLIGKAILDKNPKLRVVVNKIGNIENEFRTFPMEILAGEGLDLDLLKEHGCRFKLDFAKVYWNSRLQGEHARLVQYITKPKECIVADAMAGVGPFAVPLTSALAPHYYKTTVVCHANDLNPISYKYLQTNAQLNRCFADRLITYNLDGREFIHKMNYERIEADHFIMNLPQMAPEFLDAFRGWKFDDTTGHRPIIHVHCFDEKTRNEEETARMETHVLQRCEAALGSSGCLVDKRQENDVQIRVVRDVGPRKNMLCVSFRLPVEVAGVEKLLLTKNSDAEVNGKRKRENYDCVAEVSNVSKKERDS.

S-adenosyl-L-methionine is bound by residues His-244, 292–293 (DL), 321–322 (DG), and Asn-342.

This sequence belongs to the class I-like SAM-binding methyltransferase superfamily. TRM5/TYW2 family. As to quaternary structure, monomer.

Its subcellular location is the mitochondrion matrix. It is found in the nucleus. It localises to the cytoplasm. It carries out the reaction guanosine(37) in tRNA + S-adenosyl-L-methionine = N(1)-methylguanosine(37) in tRNA + S-adenosyl-L-homocysteine + H(+). In terms of biological role, specifically methylates the N1 position of guanosine-37 in various cytoplasmic and mitochondrial tRNAs. Methylation is not dependent on the nature of the nucleoside 5' of the target nucleoside. This is the first step in the biosynthesis of wybutosine (yW), a modified base adjacent to the anticodon of tRNAs and required for accurate decoding. This Thalassiosira pseudonana (Marine diatom) protein is tRNA (guanine(37)-N(1))-methyltransferase.